The following is a 323-amino-acid chain: Prostaglandin F synthase 1 (323 aa).

Residues 20–24 and Asp50 each bind NADP(+); that span reads GFGTY. Tyr55 serves as the catalytic Proton donor. Residue His117 participates in substrate binding. NADP(+)-binding positions include 166-167, Gln190, 216-221, and 270-280; these read SN, YAALGA, and KSFNKKRIKEN.

It belongs to the aldo/keto reductase family. In terms of assembly, monomer. Post-translationally, the N-terminus is blocked.

It is found in the cytoplasm. The catalysed reaction is prostaglandin F2alpha + NADP(+) = prostaglandin D2 + NADPH + H(+). It participates in lipid metabolism; prostaglandin biosynthesis. Its function is as follows. Catalyzes the reduction of PGD(2) and PGH(2) to PGF(2 alpha) and a stereoisomer, respectively. It has a broad substrate specificity and also reduces other carbonyl compounds. In Bos taurus (Bovine), this protein is Prostaglandin F synthase 1.